A 100-amino-acid polypeptide reads, in one-letter code: MDIIKAYIILSIALFLIGLLGVIVRKNLITVLVSTELMLNGINLALVAADKVLGRVDGQIFAFFVLTVAAAEVAVGLGLIVAIFRLKGYEASHEISQLRD.

A run of 3 helical transmembrane segments spans residues 3-23 (IIKAYIILSIALFLIGLLGVI), 28-48 (LITVLVSTELMLNGINLALVA), and 60-80 (IFAFFVLTVAAAEVAVGLGLI).

This sequence belongs to the complex I subunit 4L family. In terms of assembly, NDH-1 is composed of 14 different subunits. Subunits NuoA, H, J, K, L, M, N constitute the membrane sector of the complex.

It localises to the cell inner membrane. The enzyme catalyses a quinone + NADH + 5 H(+)(in) = a quinol + NAD(+) + 4 H(+)(out). Its function is as follows. NDH-1 shuttles electrons from NADH, via FMN and iron-sulfur (Fe-S) centers, to quinones in the respiratory chain. The immediate electron acceptor for the enzyme in this species is believed to be ubiquinone. Couples the redox reaction to proton translocation (for every two electrons transferred, four hydrogen ions are translocated across the cytoplasmic membrane), and thus conserves the redox energy in a proton gradient. This chain is NADH-quinone oxidoreductase subunit K 1, found in Aquifex aeolicus (strain VF5).